The primary structure comprises 82 residues: NAD(P)H-quinone oxidoreductase subunit O (82 aa).

Belongs to the complex I NdhO subunit family. In terms of assembly, NDH-1 can be composed of about 15 different subunits; different subcomplexes with different compositions have been identified which probably have different functions.

Its subcellular location is the cellular thylakoid membrane. It carries out the reaction a plastoquinone + NADH + (n+1) H(+)(in) = a plastoquinol + NAD(+) + n H(+)(out). The catalysed reaction is a plastoquinone + NADPH + (n+1) H(+)(in) = a plastoquinol + NADP(+) + n H(+)(out). Functionally, NDH-1 shuttles electrons from an unknown electron donor, via FMN and iron-sulfur (Fe-S) centers, to quinones in the respiratory and/or the photosynthetic chain. The immediate electron acceptor for the enzyme in this species is believed to be plastoquinone. Couples the redox reaction to proton translocation, and thus conserves the redox energy in a proton gradient. Cyanobacterial NDH-1 also plays a role in inorganic carbon-concentration. The protein is NAD(P)H-quinone oxidoreductase subunit O of Prochlorococcus marinus (strain MIT 9211).